The primary structure comprises 130 residues: Riboflavin kinase (130 aa).

Gly12 to Ala17 is a binding site for CDP. Mg(2+) is bound by residues Thr39 and Asn41. Thr90 and Glu98 together coordinate FMN. Lys103–Arg106 serves as a coordination point for CDP.

The protein belongs to the archaeal riboflavin kinase family. Requires Mg(2+) as cofactor.

It catalyses the reaction riboflavin + CTP = CDP + FMN + H(+). Its pathway is cofactor biosynthesis; FMN biosynthesis; FMN from riboflavin (CTP route): step 1/1. Functionally, catalyzes the CTP-dependent phosphorylation of riboflavin (vitamin B2) to form flavin mononucleotide (FMN). The protein is Riboflavin kinase of Staphylothermus marinus (strain ATCC 43588 / DSM 3639 / JCM 9404 / F1).